The sequence spans 116 residues: NADPH-dependent 7-cyano-7-deazaguanine reductase (116 aa).

The Thioimide intermediate role is filled by Cys31. Asp38 functions as the Proton donor in the catalytic mechanism. Residues 53-55 (IEL) and 72-73 (YE) contribute to the substrate site.

The protein belongs to the GTP cyclohydrolase I family. QueF type 1 subfamily.

Its subcellular location is the cytoplasm. It carries out the reaction 7-aminomethyl-7-carbaguanine + 2 NADP(+) = 7-cyano-7-deazaguanine + 2 NADPH + 3 H(+). It participates in tRNA modification; tRNA-queuosine biosynthesis. Its function is as follows. Catalyzes the NADPH-dependent reduction of 7-cyano-7-deazaguanine (preQ0) to 7-aminomethyl-7-deazaguanine (preQ1). The sequence is that of NADPH-dependent 7-cyano-7-deazaguanine reductase from Pelodictyon phaeoclathratiforme (strain DSM 5477 / BU-1).